Reading from the N-terminus, the 233-residue chain is Large ribosomal subunit protein uL1 (233 aa).

It belongs to the universal ribosomal protein uL1 family. As to quaternary structure, part of the 50S ribosomal subunit.

Binds directly to 23S rRNA. The L1 stalk is quite mobile in the ribosome, and is involved in E site tRNA release. Its function is as follows. Protein L1 is also a translational repressor protein, it controls the translation of the L11 operon by binding to its mRNA. In Shewanella sediminis (strain HAW-EB3), this protein is Large ribosomal subunit protein uL1.